A 414-amino-acid chain; its full sequence is Probable elongation factor 1-gamma 1 (414 aa).

A GST N-terminal domain is found at 1-82; it reads MALVLHTYKG…YVSRLNGDNS (82 aa). A GST C-terminal domain is found at 87–215; that stretch reads SLIEYAQIEQ…VKQTEAVPPI (129 aa). The segment covering 214 to 224 has biased composition (low complexity); the sequence is PIASKKAAQPA. The tract at residues 214-260 is disordered; the sequence is PIASKKAAQPAKPKEEPKKKEAPVAEAPKLAEEEEAPKPKAKNPLDL. A compositionally biased stretch (basic and acidic residues) spans 225–236; that stretch reads KPKEEPKKKEAP. Residues 254-414 form the EF-1-gamma C-terminal domain; the sequence is AKNPLDLLPP…EALLDAKCFK (161 aa).

As to quaternary structure, EF-1 is composed of four subunits: alpha, beta, delta, and gamma.

Functionally, probably plays a role in anchoring the complex to other cellular components. The sequence is that of Probable elongation factor 1-gamma 1 from Arabidopsis thaliana (Mouse-ear cress).